Here is a 429-residue protein sequence, read N- to C-terminus: Nicotinate phosphoribosyltransferase (429 aa).

Nicotinate contacts are provided by Y15, F177, and T229. H232 is subject to Phosphohistidine; by autocatalysis. Position 294 (R294) interacts with nicotinate. T355 contacts 5-phospho-alpha-D-ribose 1-diphosphate.

This sequence belongs to the NAPRTase family. Transiently phosphorylated on a His residue during the reaction cycle. Phosphorylation strongly increases the affinity for substrates and increases the rate of nicotinate D-ribonucleotide production. Dephosphorylation regenerates the low-affinity form of the enzyme, leading to product release.

The protein localises to the cytoplasm. Its subcellular location is the nucleus. It carries out the reaction nicotinate + 5-phospho-alpha-D-ribose 1-diphosphate + ATP + H2O = nicotinate beta-D-ribonucleotide + ADP + phosphate + diphosphate. Its pathway is cofactor biosynthesis; NAD(+) biosynthesis; nicotinate D-ribonucleotide from nicotinate: step 1/1. Functionally, catalyzes the first step in the biosynthesis of NAD from nicotinic acid, the ATP-dependent synthesis of beta-nicotinate D-ribonucleotide from nicotinate and 5-phospho-D-ribose 1-phosphate. Essential for growth under anaerobic conditions. The chain is Nicotinate phosphoribosyltransferase (NPT1) from Saccharomyces cerevisiae (strain ATCC 204508 / S288c) (Baker's yeast).